A 318-amino-acid chain; its full sequence is UDP-N-acetylenolpyruvoylglucosamine reductase (318 aa).

Residues 38 to 204 (IGGICPVVVE…LGIEILLKEG (167 aa)) enclose the FAD-binding PCMH-type domain. Arginine 182 is a catalytic residue. Positions 212-232 (SLKDKRDRRNSSQPENKKSAG) are disordered. Basic and acidic residues predominate over residues 213-229 (LKDKRDRRNSSQPENKK). The active-site Proton donor is the serine 233. Glutamate 310 is an active-site residue.

The protein belongs to the MurB family. FAD is required as a cofactor.

The protein resides in the cytoplasm. The enzyme catalyses UDP-N-acetyl-alpha-D-muramate + NADP(+) = UDP-N-acetyl-3-O-(1-carboxyvinyl)-alpha-D-glucosamine + NADPH + H(+). The protein operates within cell wall biogenesis; peptidoglycan biosynthesis. Functionally, cell wall formation. The protein is UDP-N-acetylenolpyruvoylglucosamine reductase of Leptospira borgpetersenii serovar Hardjo-bovis (strain L550).